The sequence spans 31 residues: Cytochrome b6-f complex subunit 6 (31 aa).

The helical transmembrane segment at 4 to 24 (LTSYFGFLLAALTITLALFIG) threads the bilayer.

Belongs to the PetL family. In terms of assembly, the 4 large subunits of the cytochrome b6-f complex are cytochrome b6, subunit IV (17 kDa polypeptide, PetD), cytochrome f and the Rieske protein, while the 4 small subunits are PetG, PetL, PetM and PetN. The complex functions as a dimer.

The protein localises to the plastid. It is found in the chloroplast thylakoid membrane. Functionally, component of the cytochrome b6-f complex, which mediates electron transfer between photosystem II (PSII) and photosystem I (PSI), cyclic electron flow around PSI, and state transitions. PetL is important for photoautotrophic growth as well as for electron transfer efficiency and stability of the cytochrome b6-f complex. This is Cytochrome b6-f complex subunit 6 from Triticum aestivum (Wheat).